The chain runs to 1386 residues: YLP motif-containing protein 1 (1386 aa).

2 disordered regions span residues 1–336 (MYPN…EDAR) and 517–1068 (TSIP…PPGR). Residues 14–27 (YPPPPVPPPPPPVA) are compositionally biased toward pro residues. Composition is skewed to low complexity over residues 31-50 (ASPG…SSSG) and 59-80 (LAQL…LQPH). 5 stretches are compositionally biased toward pro residues: residues 81 to 93 (HLPP…PPVM), 102 to 114 (QPPP…PPGP), 148 to 158 (PESPPVPPGSY), 166 to 176 (MPPPQPPPSYY), and 184 to 203 (YLPP…PPSI). Polar residues predominate over residues 237–259 (STMTPQEQQQYWYRQHLLSLQQR). Positions 260–270 (TKVHLPGHKKG) are enriched in basic residues. Positions 276–285 (DVPEPIKEEA) are enriched in basic and acidic residues. The span at 302-317 (PPLPPPNEEAPPPLSP) shows a compositional bias: pro residues. Acidic residues predominate over residues 320-333 (PQSEDSEDSEDSEE). 3 stretches are compositionally biased toward pro residues: residues 517–558 (TSIP…PPPA), 566–603 (PVLP…PQGM), and 641–650 (PPSPYHPPPQ). Residues 651–667 (SEQVNSKPLNKVFSSEQ) are compositionally biased toward polar residues. Lysine 683 is modified (N6-methyllysine). Basic and acidic residues predominate over residues 706 to 722 (RGPREQKEQLQKLKDFG). The span at 746–761 (MYPPPGSYRPPPPMGK) shows a compositional bias: pro residues. Positions 762–779 (PPGSIVRPSAPPARSSIP) are enriched in low complexity. 2 stretches are compositionally biased toward pro residues: residues 781 to 803 (TRPP…PPPV) and 848 to 878 (PVLP…PPPV). Residue lysine 894 forms a Glycyl lysine isopeptide (Lys-Gly) (interchain with G-Cter in SUMO2) linkage. Basic and acidic residues-rich tracts occupy residues 904-938 (ITLR…EPYF), 945-1014 (TDHR…DRPP), 1023-1033 (GERRTYPEERM), and 1049-1068 (RVEK…PPGR). Lysine 951 is covalently cross-linked (Glycyl lysine isopeptide (Lys-Gly) (interchain with G-Cter in SUMO2)). The interval 1336–1343 (KKRVRWAD) is involved in interaction with PPP1CA.

Interacts with PPP1CA and NCOA5. Forms a complex with ILF2, ILF3, KHDRBS1, RBMX, NCOA5 and PPP1CA.

The protein localises to the nucleus. Its subcellular location is the nucleus speckle. In terms of biological role, plays a role in the reduction of telomerase activity during differentiation of embryonic stem cells by binding to the core promoter of TERT and controlling its down-regulation. The protein is YLP motif-containing protein 1 (Ylpm1) of Mus musculus (Mouse).